A 221-amino-acid polypeptide reads, in one-letter code: 3-dehydroquinate dehydratase (221 aa).

3-dehydroquinate is bound by residues 33–35 (EIR) and Arg63. His118 (proton donor/acceptor) is an active-site residue. The active-site Schiff-base intermediate with substrate is the Lys144. Residues Arg181, Thr200, and Gln204 each contribute to the 3-dehydroquinate site.

This sequence belongs to the type-I 3-dehydroquinase family. Homodimer.

The enzyme catalyses 3-dehydroquinate = 3-dehydroshikimate + H2O. It functions in the pathway metabolic intermediate biosynthesis; chorismate biosynthesis; chorismate from D-erythrose 4-phosphate and phosphoenolpyruvate: step 3/7. Its function is as follows. Involved in the third step of the chorismate pathway, which leads to the biosynthesis of aromatic amino acids. Catalyzes the cis-dehydration of 3-dehydroquinate (DHQ) and introduces the first double bond of the aromatic ring to yield 3-dehydroshikimate. The sequence is that of 3-dehydroquinate dehydratase from Methanothermobacter thermautotrophicus (strain ATCC 29096 / DSM 1053 / JCM 10044 / NBRC 100330 / Delta H) (Methanobacterium thermoautotrophicum).